A 491-amino-acid polypeptide reads, in one-letter code: UDP-N-acetylmuramate--L-alanine ligase (491 aa).

An ATP-binding site is contributed by 126–132 (GTHGKTT).

It belongs to the MurCDEF family.

It localises to the cytoplasm. The enzyme catalyses UDP-N-acetyl-alpha-D-muramate + L-alanine + ATP = UDP-N-acetyl-alpha-D-muramoyl-L-alanine + ADP + phosphate + H(+). The protein operates within cell wall biogenesis; peptidoglycan biosynthesis. Functionally, cell wall formation. This chain is UDP-N-acetylmuramate--L-alanine ligase, found in Shigella boydii serotype 18 (strain CDC 3083-94 / BS512).